We begin with the raw amino-acid sequence, 320 residues long: Malate dehydrogenase (320 aa).

Residues 10–15 and Asp34 contribute to the NAD(+) site; that span reads GAGQIG. Residues Arg83 and Arg89 each coordinate substrate. NAD(+) contacts are provided by residues Asn96 and 119–121; that span reads ITN. The substrate site is built by Asn121 and Arg152. The active-site Proton acceptor is the His176.

The protein belongs to the LDH/MDH superfamily. MDH type 3 family.

The catalysed reaction is (S)-malate + NAD(+) = oxaloacetate + NADH + H(+). Catalyzes the reversible oxidation of malate to oxaloacetate. The sequence is that of Malate dehydrogenase from Methylobacterium radiotolerans (strain ATCC 27329 / DSM 1819 / JCM 2831 / NBRC 15690 / NCIMB 10815 / 0-1).